Consider the following 220-residue polypeptide: UPF0319 protein YccT (220 aa).

Positions 1 to 20 are cleaved as a signal peptide; the sequence is MKTGIVTTLIALCLPVSVFA.

The protein belongs to the UPF0319 family.

This is UPF0319 protein YccT from Shigella flexneri serotype 5b (strain 8401).